Consider the following 245-residue polypeptide: 1-(5-phosphoribosyl)-5-[(5-phosphoribosylamino)methylideneamino] imidazole-4-carboxamide isomerase (245 aa).

Catalysis depends on Asp-8, which acts as the Proton acceptor. Catalysis depends on Asp-131, which acts as the Proton donor.

This sequence belongs to the HisA/HisF family.

The protein localises to the cytoplasm. The enzyme catalyses 1-(5-phospho-beta-D-ribosyl)-5-[(5-phospho-beta-D-ribosylamino)methylideneamino]imidazole-4-carboxamide = 5-[(5-phospho-1-deoxy-D-ribulos-1-ylimino)methylamino]-1-(5-phospho-beta-D-ribosyl)imidazole-4-carboxamide. It functions in the pathway amino-acid biosynthesis; L-histidine biosynthesis; L-histidine from 5-phospho-alpha-D-ribose 1-diphosphate: step 4/9. The protein is 1-(5-phosphoribosyl)-5-[(5-phosphoribosylamino)methylideneamino] imidazole-4-carboxamide isomerase of Neisseria meningitidis serogroup C (strain 053442).